Here is a 337-residue protein sequence, read N- to C-terminus: Phosphatidate cytidylyltransferase, mitochondrial (337 aa).

Belongs to the TAM41 family. Requires Mg(2+) as cofactor. As to expression, brain and liver.

It localises to the mitochondrion inner membrane. The enzyme catalyses a 1,2-diacyl-sn-glycero-3-phosphate + CTP + H(+) = a CDP-1,2-diacyl-sn-glycerol + diphosphate. It functions in the pathway phospholipid metabolism; CDP-diacylglycerol biosynthesis; CDP-diacylglycerol from sn-glycerol 3-phosphate: step 3/3. Catalyzes the conversion of phosphatidic acid (PA) to CDP-diacylglycerol (CDP-DAG), an essential intermediate in the synthesis of phosphatidylglycerol, cardiolipin and phosphatidylinositol. The polypeptide is Phosphatidate cytidylyltransferase, mitochondrial (Tamm41) (Rattus norvegicus (Rat)).